We begin with the raw amino-acid sequence, 84 residues long: Large ribosomal subunit protein eL34 (84 aa).

The protein belongs to the eukaryotic ribosomal protein eL34 family.

The sequence is that of Large ribosomal subunit protein eL34 from Pyrobaculum islandicum (strain DSM 4184 / JCM 9189 / GEO3).